Reading from the N-terminus, the 126-residue chain is Small ribosomal subunit protein uS13 (126 aa).

The disordered stretch occupies residues 95–126 (GMPVRGQRTRTNARTRRGRRGQAIGIKKKVKK).

The protein belongs to the universal ribosomal protein uS13 family. In terms of assembly, part of the 30S ribosomal subunit. Forms a loose heterodimer with protein S19. Forms two bridges to the 50S subunit in the 70S ribosome.

Located at the top of the head of the 30S subunit, it contacts several helices of the 16S rRNA. In the 70S ribosome it contacts the 23S rRNA (bridge B1a) and protein L5 of the 50S subunit (bridge B1b), connecting the 2 subunits; these bridges are implicated in subunit movement. Contacts the tRNAs in the A and P-sites. This Chloroflexus aggregans (strain MD-66 / DSM 9485) protein is Small ribosomal subunit protein uS13.